Reading from the N-terminus, the 259-residue chain is 2-oxoglutaramate amidase (259 aa).

The CN hydrolase domain maps to 3–238 (WTISCLQFDI…EGIVRAEIDL (236 aa)). The active-site Proton acceptor is Glu-42. The active-site Proton donor is the Lys-111. The active-site Nucleophile is Cys-145.

The protein belongs to the carbon-nitrogen hydrolase superfamily. NIT1/NIT2 family.

The enzyme catalyses 2-oxoglutaramate + H2O = 2-oxoglutarate + NH4(+). In terms of biological role, involved in the methylthioribose (MTR) recycling pathway. Probably catalyzes the conversion of 2-oxoglutaramate to 2-oxoglutarate. This is 2-oxoglutaramate amidase from Bacillus subtilis (strain 168).